We begin with the raw amino-acid sequence, 470 residues long: Na(+)/H(+) antiporter NhaA 2 (470 aa).

Helical transmembrane passes span 34 to 54 (FLHIEAASGILLLVAAAIALL), 85 to 105 (LEWVVNDGLMAIFFFVVGMEI), 121 to 141 (ALPAAAALGGMLVPAGLYLLL), 150 to 170 (GWGVPMATDIAFAVGILTLLG), 179 to 199 (VLLLALAVIDDLGAIIVIAVF), 202 to 222 (SGVAITGLLVAALGIVGVFAM), 241 to 261 (WAGVYSAGIHPTIAGVIIGLI), 317 to 337 (SLIATLHPWVAFGIMPVFALA), 357 to 377 (LATATGLLVGKPLGVIGACWL), 395 to 415 (LLVLGSTAGIGFTMALFIAQL), and 423 to 443 (LAAGKLGVLAASGAAAVVALV).

Belongs to the NhaA Na(+)/H(+) (TC 2.A.33) antiporter family.

It is found in the cell inner membrane. The catalysed reaction is Na(+)(in) + 2 H(+)(out) = Na(+)(out) + 2 H(+)(in). Its function is as follows. Na(+)/H(+) antiporter that extrudes sodium in exchange for external protons. The chain is Na(+)/H(+) antiporter NhaA 2 from Myxococcus xanthus (strain DK1622).